The primary structure comprises 236 residues: 7-cyano-7-deazaguanine synthase (236 aa).

7–17 is a binding site for ATP; that stretch reads CSGGLDSVTLA. Residues cysteine 185, cysteine 193, cysteine 196, and cysteine 199 each coordinate Zn(2+).

The protein belongs to the QueC family. Requires Zn(2+) as cofactor.

The enzyme catalyses 7-carboxy-7-deazaguanine + NH4(+) + ATP = 7-cyano-7-deazaguanine + ADP + phosphate + H2O + H(+). Its pathway is purine metabolism; 7-cyano-7-deazaguanine biosynthesis. Its function is as follows. Catalyzes the ATP-dependent conversion of 7-carboxy-7-deazaguanine (CDG) to 7-cyano-7-deazaguanine (preQ(0)). The polypeptide is 7-cyano-7-deazaguanine synthase (Rhizobium johnstonii (strain DSM 114642 / LMG 32736 / 3841) (Rhizobium leguminosarum bv. viciae)).